The chain runs to 357 residues: MSLTRLLIRDFRNIETADLALSPGFNFLVGANGSGKTSMLEAIYTLGHGRAFRSLQIGRVIRHEQEAFVLHGRLQGEERETAIGLTKDKQGDSKVRIDGTDGHKVAELAHLMPMQLITPEGFTLLNGGPKYRRAFLDWGCFHNESGFFTAWSNLKRLLKQRNAALRQVTRYEQLRPWDKELILLAEQISTWRAEYSAGIAADMADTCKQFLPEFSLTFSFQRGWEKETEYAEVLERNFERDRQLTYTAHGPHKADLRIRADGAPVEDTLSRGQLKLLMCALRLAQGEFLTRESGRRCLYLIDDFASELDDERRGLLASRLKATQSQVFVSAISAEHVIDMSDENSKMFTVEKGKITD.

30–37 (GANGSGKT) is an ATP binding site.

This sequence belongs to the RecF family.

Its subcellular location is the cytoplasm. Its function is as follows. The RecF protein is involved in DNA metabolism; it is required for DNA replication and normal SOS inducibility. RecF binds preferentially to single-stranded, linear DNA. It also seems to bind ATP. In Shigella dysenteriae serotype 1 (strain Sd197), this protein is DNA replication and repair protein RecF.